The following is a 62-amino-acid chain: Conotoxin Pn-014 (62 aa).

The first 22 residues, 1–22 (MRCLPVFVILLLLIASAPSVDA), serve as a signal peptide directing secretion. A propeptide spanning residues 23–48 (RPKTKDDIPLVSFQDHAKRILQTFES) is cleaved from the precursor. At tryptophan 61 the chain carries Tryptophan amide.

It belongs to the conotoxin T superfamily. Post-translationally, contains 2 disulfide bonds that can be either 'C1-C3, C2-C4' or 'C1-C4, C2-C3', since these disulfide connectivities have been observed for conotoxins with cysteine framework V (for examples, see AC P0DQQ7 and AC P81755). Expressed by the venom duct.

Its subcellular location is the secreted. This is Conotoxin Pn-014 from Conus pennaceus (Feathered cone).